Reading from the N-terminus, the 242-residue chain is 1-(5-phosphoribosyl)-5-[(5-phosphoribosylamino)methylideneamino] imidazole-4-carboxamide isomerase (242 aa).

Aspartate 8 (proton acceptor) is an active-site residue. Aspartate 129 acts as the Proton donor in catalysis.

The protein belongs to the HisA/HisF family.

Its subcellular location is the cytoplasm. It carries out the reaction 1-(5-phospho-beta-D-ribosyl)-5-[(5-phospho-beta-D-ribosylamino)methylideneamino]imidazole-4-carboxamide = 5-[(5-phospho-1-deoxy-D-ribulos-1-ylimino)methylamino]-1-(5-phospho-beta-D-ribosyl)imidazole-4-carboxamide. Its pathway is amino-acid biosynthesis; L-histidine biosynthesis; L-histidine from 5-phospho-alpha-D-ribose 1-diphosphate: step 4/9. This Clostridium botulinum (strain Langeland / NCTC 10281 / Type F) protein is 1-(5-phosphoribosyl)-5-[(5-phosphoribosylamino)methylideneamino] imidazole-4-carboxamide isomerase.